Consider the following 326-residue polypeptide: Transcription factor MYB16 (326 aa).

2 consecutive HTH myb-type domains span residues 9 to 61 (KLGL…TNYL) and 62 to 116 (RPDI…KKRL). 2 consecutive DNA-binding regions (H-T-H motif) follow at residues 37-61 (WRSLPEKAGLHRCGKSCRLRWTNYL) and 89-112 (WSAIATHLPKRTDNEIKNYWNTHL). Disordered stretches follow at residues 197 to 217 (NWTTKPHEDQQQLESPTSTVS) and 280 to 299 (DRSFSGDKNETAGESSGGDC). Residues 208 to 217 (QLESPTSTVS) are compositionally biased toward polar residues. A compositionally biased stretch (basic and acidic residues) spans 280–290 (DRSFSGDKNET).

As to expression, expressed in trichomes, epidermis and mesophyll cells of young leaves, stems, petals, sepals, carpels and stamens.

The protein localises to the nucleus. Its function is as follows. Involved in the control of epidermal cell morphogenesis in petals. Promotes unidirectional cell expansion once outgrowth has been initiated. Coordinately with WIN1/SHN1, participates in the regulation of cuticle biosynthesis and wax accumulation in reproductive organs and trichomes. Functions in cuticle nanoridge formation in petals and stamens, and in morphogenesis of petal conical cells and trichomes. Functions as a major regulator of cuticle formation in vegetative organs by regulating the cuticle biosynthesis genes CYP86A8/LCR and CER1. The polypeptide is Transcription factor MYB16 (Arabidopsis thaliana (Mouse-ear cress)).